Consider the following 303-residue polypeptide: Exosome complex component RRP4 homolog (303 aa).

The KH domain maps to G175–P213.

The protein belongs to the RRP4 family. Component of the RNA exosome complex. Ubiquitously expressed.

It is found in the nucleus. Its subcellular location is the nucleolus. The protein resides in the nucleoplasm. Non-catalytic component of the RNA exosome complex which has 3'-&gt;5' exoribonuclease activity and participates in a multitude of cellular RNA processing and degradation events. Involved in regulation of antisense ribosomal siRNA production. Involved in response to cold-warm shock. In Caenorhabditis elegans, this protein is Exosome complex component RRP4 homolog.